A 107-amino-acid polypeptide reads, in one-letter code: UPF0145 protein ESA_02470 (107 aa).

It belongs to the UPF0145 family.

The protein is UPF0145 protein ESA_02470 of Cronobacter sakazakii (strain ATCC BAA-894) (Enterobacter sakazakii).